A 448-amino-acid polypeptide reads, in one-letter code: Tubby-like F-box protein 3 (448 aa).

In terms of domain architecture, F-box spans 56–102 (ESRWASLPPELLREVIRRLEADESTWPSRRNVVCFAAVCRTWREMCK). Residues 387-403 (PSPPPAGAPTPSQPGPA) are compositionally biased toward pro residues. Residues 387 to 406 (PSPPPAGAPTPSQPGPADPE) form a disordered region.

This sequence belongs to the TUB family. In terms of tissue distribution, expressed in roots, leaves, flowers and seeds.

The protein is Tubby-like F-box protein 3 (TULP3) of Oryza sativa subsp. japonica (Rice).